The following is a 283-amino-acid chain: Pantothenate synthetase (283 aa).

Residue 30 to 37 coordinates ATP; sequence MGYFHEGH. Residue H37 is the Proton donor of the active site. Residue Q61 coordinates (R)-pantoate. Q61 is a beta-alanine binding site. Residue 147 to 150 coordinates ATP; the sequence is GEKD. A (R)-pantoate-binding site is contributed by Q153. ATP is bound by residues V176 and 184–187; that span reads MSSR.

The protein belongs to the pantothenate synthetase family. In terms of assembly, homodimer.

It localises to the cytoplasm. It carries out the reaction (R)-pantoate + beta-alanine + ATP = (R)-pantothenate + AMP + diphosphate + H(+). It functions in the pathway cofactor biosynthesis; (R)-pantothenate biosynthesis; (R)-pantothenate from (R)-pantoate and beta-alanine: step 1/1. In terms of biological role, catalyzes the condensation of pantoate with beta-alanine in an ATP-dependent reaction via a pantoyl-adenylate intermediate. The sequence is that of Pantothenate synthetase from Syntrophobacter fumaroxidans (strain DSM 10017 / MPOB).